The primary structure comprises 183 residues: Protein P7 (183 aa).

It localises to the host nucleus. May play a role in inhibition of the host immune system by counteracting the type I interferon response. The polypeptide is Protein P7 (Gadus morhua (Atlantic cod)).